The chain runs to 2586 residues: Highly reducing polyketide synthase FUM1 (2586 aa).

The Ketosynthase family 3 (KS3) domain occupies 29-451; sequence VLPVAIVGMG…GANAHCIIET (423 aa). Active-site for beta-ketoacyl synthase activity residues include Cys-201, His-336, and His-374. The malonyl-CoA:ACP transacylase (MAT) domain stretch occupies residues 609-928; sequence IFTGQGAQWV…TESLLKLAGE (320 aa). The tract at residues 980 to 1111 is N-terminal hotdog fold; the sequence is HELLGSRTLE…GQVRPGQDAH (132 aa). The tract at residues 980–1269 is dehydratase (DH) domain; sequence HELLGSRTLE…LEDGKFSPLE (290 aa). In terms of domain architecture, PKS/mFAS DH spans 980 to 1274; that stretch reads HELLGSRTLE…FSPLEMDLAE (295 aa). The active-site Proton acceptor; for dehydratase activity is the His-1012. Residues 1125–1274 form a C-terminal hotdog fold region; it reads QHYPRLVDNL…FSPLEMDLAE (150 aa). The Proton donor; for dehydratase activity role is filled by Asp-1186. A methyltransferase (CMet) domain region spans residues 1450–1627; it reads DFFATAGHTR…GFSGVDSAIY (178 aa). The enoyl reductase (ER) (ER) domain stretch occupies residues 1862–2172; it reads GLLQTLGWVP…KGVHLGKIVV (311 aa). The interval 2197-2373 is ketoreductase (KR) domain; the sequence is ASYLLVGGLG…ASVLQIGLIE (177 aa). The 80-residue stretch at 2486-2565 folds into the Carrier domain; it reads PATVELVTNE…GLARLTVDGL (80 aa). Ser-2524 carries the post-translational modification O-(pantetheine 4'-phosphoryl)serine.

It functions in the pathway mycotoxin biosynthesis. Functionally, highly reducing polyketide synthase; part of the gene cluster that mediates the biosynthesis of fumonisins B1 (FB1), B2 (FB2), B3 (FB3), and B4 (FB4), which are carcinogenic mycotoxins. The biosynthesis starts with the FUM1-catalyzed carbon chain assembly from one molecule of acetyl-CoA, eight molecules of malonyl-CoA, and two molecules of methionine (in S-adenosyl form). The C18 polyketide chain is released from the enzyme by a nucleophilic attack of a carbanion, which is derived from R-carbon of alanine by decarboxylation, on the carbonyl carbon of polyketide acyl chain. This step is catalyzed by the pyridoxal 5'-phosphate-dependent aminoacyl transferase FUM8. The resultant 3-keto intermediate is then stereospecifically reduced to a 3-hydroxyl product by reductase FUM13. Subsequent oxidations at C-10 by the cytochrome P450 monooxygenase FUM2, C-14 and C-15 by FUM6, FUM12 or FUM15, tricarballylic esterification of the hydroxyl groups on C-14 and C-15 by acyltransferase FUM14, and C-5 hydroxylation by 2-keto-glutarate-dependent dioxygenase FUM3 furnish the biosynthesis of fumonisins. The tricarballylic moieties are most likely derived from the citric acid cycle, and their addition to the carbon backbone may involve FUM7, FUM10, FUM11 and FUM14. The protein is Highly reducing polyketide synthase FUM1 of Gibberella moniliformis (strain M3125 / FGSC 7600) (Maize ear and stalk rot fungus).